The following is a 1347-amino-acid chain: Protein dispatched homolog 3 (1347 aa).

Residues 1–67 are Cytoplasmic-facing; it reads MDSEDDPLLQ…LGWAFTNPCC (67 aa). Residues 68–88 form a helical membrane-spanning segment; sequence AGLVLFLGCSIPMVLSAFMFL. The Lumenal segment spans residues 89 to 417; sequence YYPPLDIDIS…YEVRRTFNND (329 aa). The disordered stretch occupies residues 156–207; that stretch reads GNHSRPASRAPRSAPRDTVATQTSAANSSERRRREAPSPEGQVTNQSRARRG. Asn-157 is a glycosylation site (N-linked (GlcNAc...) asparagine). Residues 159 to 168 are compositionally biased toward low complexity; sequence SRPASRAPRS. The region spanning 412-570 is the SSD domain; that stretch reads RTFNNDMLLA…LFTMPAALGL (159 aa). The chain crosses the membrane as a helical span at residues 418–438; sequence MLLAFISSSCIAALVYILTSC. Position 439 (Ser-439) is a topological domain, cytoplasmic. Residues 440–460 traverse the membrane as a helical segment; it reads VFLSFFGIASIGLSCLVALFL. Residues 461-463 are Lumenal-facing; it reads YHV. A helical membrane pass occupies residues 464–484; it reads VFGIQYLGILNGVAAFVIVGI. Residues 485-528 lie on the Cytoplasmic side of the membrane; the sequence is GVDDVFVFINTYRQATHLEDPQLRMIHTIQTAGKATFFTSLTTA. A helical membrane pass occupies residues 529-549; the sequence is AAYAANVFSQIPAVHDFGLFM. A topological domain (lumenal) is located at residue Ser-550. The helical transmembrane segment at 551–571 threads the bilayer; that stretch reads LIVTCCWLAVLFTMPAALGLW. Residues 572–684 lie on the Cytoplasmic side of the membrane; that stretch reads SLYMAPLESS…WVLWAAVKSR (113 aa). A helical membrane pass occupies residues 685 to 705; it reads WVIVGLFASILILSLVFASRL. Topologically, residues 706–1137 are lumenal; sequence RPASRAPLLF…IFMEIIGVQS (432 aa). Asn-976 carries N-linked (GlcNAc...) asparagine glycosylation. Residues 1138–1158 form a helical membrane-spanning segment; that stretch reads ALYGLVLSLLICVAAVAVFTT. A topological domain (cytoplasmic) is located at residue His-1159. A helical transmembrane segment spans residues 1160 to 1180; it reads VLLLLPVLLSILGIVCLVVTI. Residues 1181–1246 are Lumenal-facing; the sequence is MYWSGWEMGA…TLEAVRHVGV (66 aa). Residues 1247-1267 form a helical membrane-spanning segment; that stretch reads AIVSSALTTVIATVPLFFCII. At 1268 to 1281 the chain is on the cytoplasmic side; the sequence is APFAKFGKIVALNT. Residues 1282 to 1302 form a helical membrane-spanning segment; it reads GVSILYTLTVSTALLGIMAPG. The Lumenal segment spans residues 1303–1310; the sequence is SFTRTRTS. The helical transmembrane segment at 1311–1331 threads the bilayer; that stretch reads FLKALGAVLLAGALGLGACLV. The Cytoplasmic portion of the chain corresponds to 1332 to 1347; the sequence is LLRSGYKIPLPSGATL.

It belongs to the patched family. Expressed in brain, retina, testis and thymus.

The protein localises to the endoplasmic reticulum membrane. Its subcellular location is the nucleus membrane. It localises to the cytoplasmic vesicle membrane. Its function is as follows. Plays a role in neuronal proliferation and differentiation. Plays a role in the accumulation of cellular cholesterol. Involved in intracellular lipid droplet formation. May contribute to cholesterol homeostasis in neuronal cells. In Mus musculus (Mouse), this protein is Protein dispatched homolog 3.